We begin with the raw amino-acid sequence, 198 residues long: Translation initiation factor IF-3 (198 aa).

Positions 168–198 are disordered; the sequence is SLAPKKAGSPKKAETDTAKKENPKKAVETKE. Over residues 178 to 198 the composition is skewed to basic and acidic residues; the sequence is KKAETDTAKKENPKKAVETKE.

The protein belongs to the IF-3 family. As to quaternary structure, monomer.

Its subcellular location is the cytoplasm. Functionally, IF-3 binds to the 30S ribosomal subunit and shifts the equilibrium between 70S ribosomes and their 50S and 30S subunits in favor of the free subunits, thus enhancing the availability of 30S subunits on which protein synthesis initiation begins. This Phocaeicola vulgatus (strain ATCC 8482 / DSM 1447 / JCM 5826 / CCUG 4940 / NBRC 14291 / NCTC 11154) (Bacteroides vulgatus) protein is Translation initiation factor IF-3.